The following is a 726-amino-acid chain: Catalase-peroxidase (726 aa).

Positions 93 to 216 (WHSAGTYRVH…LAAVQMGLIY (124 aa)) form a cross-link, tryptophyl-tyrosyl-methioninium (Trp-Tyr) (with M-242). His-94 serves as the catalytic Proton acceptor. Residues 216 to 242 (YVNPEGPNGNPDPVAAAVDIRETFTRM) constitute a cross-link (tryptophyl-tyrosyl-methioninium (Tyr-Met) (with W-93)). Residue His-257 participates in heme b binding. Positions 471–490 (GSDKRGGANGARIRLSPQKD) are disordered.

Belongs to the peroxidase family. Peroxidase/catalase subfamily. Homodimer or homotetramer. Heme b serves as cofactor. Post-translationally, formation of the three residue Trp-Tyr-Met cross-link is important for the catalase, but not the peroxidase activity of the enzyme.

It carries out the reaction H2O2 + AH2 = A + 2 H2O. It catalyses the reaction 2 H2O2 = O2 + 2 H2O. Bifunctional enzyme with both catalase and broad-spectrum peroxidase activity. The chain is Catalase-peroxidase from Methylacidiphilum infernorum (isolate V4) (Methylokorus infernorum (strain V4)).